Consider the following 104-residue polypeptide: uncharacterized protein (104 aa).

A run of 2 helical transmembrane segments spans residues 45–65 (LYGI…IGVF) and 70–90 (LYLS…AKGL).

It localises to the membrane. This is an uncharacterized protein from Saccharomyces cerevisiae (strain ATCC 204508 / S288c) (Baker's yeast).